The primary structure comprises 508 residues: Photosystem II CP47 reaction center protein (508 aa).

A run of 6 helical transmembrane segments spans residues 21 to 36, 101 to 115, 140 to 156, 203 to 218, 237 to 252, and 457 to 472; these read AVHL…WAGS, IVLS…IWHW, GIHL…FGAF, IAAG…FHLS, VLSS…AFVV, and TFAL…HGAR.

The protein belongs to the PsbB/PsbC family. PsbB subfamily. As to quaternary structure, PSII is composed of 1 copy each of membrane proteins PsbA, PsbB, PsbC, PsbD, PsbE, PsbF, PsbH, PsbI, PsbJ, PsbK, PsbL, PsbM, PsbT, PsbX, PsbY, PsbZ, Psb30/Ycf12, at least 3 peripheral proteins of the oxygen-evolving complex and a large number of cofactors. It forms dimeric complexes. Binds multiple chlorophylls. PSII binds additional chlorophylls, carotenoids and specific lipids. serves as cofactor.

The protein localises to the plastid. Its subcellular location is the chloroplast thylakoid membrane. One of the components of the core complex of photosystem II (PSII). It binds chlorophyll and helps catalyze the primary light-induced photochemical processes of PSII. PSII is a light-driven water:plastoquinone oxidoreductase, using light energy to abstract electrons from H(2)O, generating O(2) and a proton gradient subsequently used for ATP formation. This Marchantia polymorpha (Common liverwort) protein is Photosystem II CP47 reaction center protein.